Reading from the N-terminus, the 571-residue chain is Transcription factor ABORTED MICROSPORES (571 aa).

Positions 275 to 284 (NDKDMNENGR) are enriched in basic and acidic residues. 3 disordered regions span residues 275-321 (NDKD…AERR), 365-390 (ELQDELEENSETEDGSNRPQGGMSLN), and 536-571 (DDHQHHNGHHHPFDHQMNQSAHHHHHHQHINHYHNQ). The 50-residue stretch at 310–359 (GSQAKNLMAERRRRKKLNDRLYALRSLVPRITKLDRASILGDAINYVKEL) folds into the bHLH domain. Over residues 368-378 (DELEENSETED) the composition is skewed to acidic residues. The span at 381 to 390 (NRPQGGMSLN) shows a compositional bias: polar residues. The segment covering 556–571 (AHHHHHHQHINHYHNQ) has biased composition (basic residues).

Homodimer. Interacts with ASHR3. Mostly expressed in closed, post-meiotic buds, and, to a lower extent, in pre-meiotic buds. Detected in leaves, stems, and flowers.

Its subcellular location is the nucleus. Its function is as follows. Transcription factor. Plays a crucial role in tapetum development. Required for male fertility and pollen differentiation, especially during the post-meiotic transcriptional regulation of microspore development within the developing anther. Binds E-box regions in the AHL16/TEK promoter. This chain is Transcription factor ABORTED MICROSPORES (AMS), found in Arabidopsis thaliana (Mouse-ear cress).